Here is a 253-residue protein sequence, read N- to C-terminus: 1-(5-phosphoribosyl)-5-[(5-phosphoribosylamino)methylideneamino] imidazole-4-carboxamide isomerase (253 aa).

Asp-11 functions as the Proton acceptor in the catalytic mechanism. Asp-132 acts as the Proton donor in catalysis.

This sequence belongs to the HisA/HisF family.

Its subcellular location is the cytoplasm. It catalyses the reaction 1-(5-phospho-beta-D-ribosyl)-5-[(5-phospho-beta-D-ribosylamino)methylideneamino]imidazole-4-carboxamide = 5-[(5-phospho-1-deoxy-D-ribulos-1-ylimino)methylamino]-1-(5-phospho-beta-D-ribosyl)imidazole-4-carboxamide. Its pathway is amino-acid biosynthesis; L-histidine biosynthesis; L-histidine from 5-phospho-alpha-D-ribose 1-diphosphate: step 4/9. The chain is 1-(5-phosphoribosyl)-5-[(5-phosphoribosylamino)methylideneamino] imidazole-4-carboxamide isomerase from Methylobacterium nodulans (strain LMG 21967 / CNCM I-2342 / ORS 2060).